A 156-amino-acid polypeptide reads, in one-letter code: ATP synthase subunit b (156 aa).

Residues 13-33 (AFIIFVWCCMKFVWPPLMAAI) form a helical membrane-spanning segment.

This sequence belongs to the ATPase B chain family. As to quaternary structure, F-type ATPases have 2 components, F(1) - the catalytic core - and F(0) - the membrane proton channel. F(1) has five subunits: alpha(3), beta(3), gamma(1), delta(1), epsilon(1). F(0) has three main subunits: a(1), b(2) and c(10-14). The alpha and beta chains form an alternating ring which encloses part of the gamma chain. F(1) is attached to F(0) by a central stalk formed by the gamma and epsilon chains, while a peripheral stalk is formed by the delta and b chains.

The protein localises to the cell inner membrane. F(1)F(0) ATP synthase produces ATP from ADP in the presence of a proton or sodium gradient. F-type ATPases consist of two structural domains, F(1) containing the extramembraneous catalytic core and F(0) containing the membrane proton channel, linked together by a central stalk and a peripheral stalk. During catalysis, ATP synthesis in the catalytic domain of F(1) is coupled via a rotary mechanism of the central stalk subunits to proton translocation. Its function is as follows. Component of the F(0) channel, it forms part of the peripheral stalk, linking F(1) to F(0). The sequence is that of ATP synthase subunit b from Aeromonas salmonicida (strain A449).